The primary structure comprises 422 residues: Serine--tRNA ligase (422 aa).

An L-serine-binding site is contributed by 231–233 (TSE). Position 262–264 (262–264 (RQE)) interacts with ATP. Glutamate 285 provides a ligand contact to L-serine. 349 to 352 (EISS) serves as a coordination point for ATP. Serine 384 serves as a coordination point for L-serine.

This sequence belongs to the class-II aminoacyl-tRNA synthetase family. Type-1 seryl-tRNA synthetase subfamily. Homodimer. The tRNA molecule binds across the dimer.

Its subcellular location is the cytoplasm. It catalyses the reaction tRNA(Ser) + L-serine + ATP = L-seryl-tRNA(Ser) + AMP + diphosphate + H(+). It carries out the reaction tRNA(Sec) + L-serine + ATP = L-seryl-tRNA(Sec) + AMP + diphosphate + H(+). The protein operates within aminoacyl-tRNA biosynthesis; selenocysteinyl-tRNA(Sec) biosynthesis; L-seryl-tRNA(Sec) from L-serine and tRNA(Sec): step 1/1. In terms of biological role, catalyzes the attachment of serine to tRNA(Ser). Is also able to aminoacylate tRNA(Sec) with serine, to form the misacylated tRNA L-seryl-tRNA(Sec), which will be further converted into selenocysteinyl-tRNA(Sec). This chain is Serine--tRNA ligase, found in Mycoplasma capricolum subsp. capricolum (strain California kid / ATCC 27343 / NCTC 10154).